Consider the following 72-residue polypeptide: UPF0270 protein YheU (72 aa).

This sequence belongs to the UPF0270 family.

This Escherichia coli (strain UTI89 / UPEC) protein is UPF0270 protein YheU.